Reading from the N-terminus, the 434-residue chain is Sulfide-quinone reductase (434 aa).

Residues 8-12 (GAGTG), 34-35 (SA), and 77-78 (SA) each bind FAD. Cys-160 serves as the catalytic Cysteine persulfide intermediate. FAD-binding residues include Ile-302 and Gly-322. The Cysteine persulfide intermediate role is filled by Cys-356. An FAD-binding site is contributed by Lys-391.

The protein belongs to the SQRD family. In terms of assembly, homodimer. FAD serves as cofactor.

It localises to the membrane. It catalyses the reaction n a quinone + n hydrogen sulfide + n H(+) = polysulfur(n-2) + n a quinol. Catalyzes the oxidation of hydrogen sulfide, with the help of a quinone. Consecutive reaction cycles lead to the accumulation of a polysulfide product on the active site Cys residues; these products are released when they exceed a critical length, typically as cyclooctasulfur. The sequence is that of Sulfide-quinone reductase from Acidithiobacillus ferrooxidans (strain ATCC 23270 / DSM 14882 / CIP 104768 / NCIMB 8455) (Ferrobacillus ferrooxidans (strain ATCC 23270)).